Reading from the N-terminus, the 60-residue chain is Metallothionein (60 aa).

Residues Met-1–Cys-28 form a beta region. The a divalent metal cation site is built by Cys-4, Cys-6, Cys-12, Cys-14, Cys-18, Cys-20, Cys-23, Cys-25, Cys-28, Cys-32, Cys-33, Cys-35, Cys-36, Cys-40, Cys-43, Cys-47, Cys-49, Cys-54, Cys-58, and Cys-59. Residues Lys-29–Gln-60 form an alpha region.

The protein belongs to the metallothionein superfamily. Type 1 family.

Its function is as follows. Metallothioneins have a high content of cysteine residues that bind various heavy metals. The polypeptide is Metallothionein (mt) (Oryzias latipes (Japanese rice fish)).